A 307-amino-acid chain; its full sequence is Elongation factor Ts (307 aa).

Positions 80–83 (TDFV) are involved in Mg(2+) ion dislocation from EF-Tu.

Belongs to the EF-Ts family.

It localises to the cytoplasm. Its function is as follows. Associates with the EF-Tu.GDP complex and induces the exchange of GDP to GTP. It remains bound to the aminoacyl-tRNA.EF-Tu.GTP complex up to the GTP hydrolysis stage on the ribosome. This is Elongation factor Ts from Methylobacterium nodulans (strain LMG 21967 / CNCM I-2342 / ORS 2060).